A 454-amino-acid polypeptide reads, in one-letter code: Mediator of RNA polymerase II transcription subunit 1 (454 aa).

The protein belongs to the Mediator complex subunit 1 family. As to quaternary structure, component of the Mediator complex.

Its subcellular location is the nucleus. Functionally, component of the Mediator complex, a coactivator involved in the regulated transcription of nearly all RNA polymerase II-dependent genes. Mediator functions as a bridge to convey information from gene-specific regulatory proteins to the basal RNA polymerase II transcription machinery. Mediator is recruited to promoters by direct interactions with regulatory proteins and serves as a scaffold for the assembly of a functional preinitiation complex with RNA polymerase II and the general transcription factors. In Schizosaccharomyces pombe (strain 972 / ATCC 24843) (Fission yeast), this protein is Mediator of RNA polymerase II transcription subunit 1 (med1).